Here is a 657-residue protein sequence, read N- to C-terminus: Cyclic-di-AMP phosphodiesterase PdeA (657 aa).

Transmembrane regions (helical) follow at residues 13–35 and 37–53; these read PLYGLIAATIILSVITFFFSWWL and ALVVVGGIILTVAMFYF. Residues 74-137 form a PAS-like region; it reads RSEEEALVEM…ITGNDEKGIM (64 aa). One can recognise a GGDEF domain in the interval 175–303; it reads NKSVFAVIFL…GGDQVVIKQP (129 aa). Residues 342 to 498 are DHH; that stretch reads VFVMGHRYPD…IEATALLSGI (157 aa). Residues His-347, Asp-351, Asp-353, Asp-422, His-446, and Asp-501 each coordinate Mn(2+). The tract at residues 592 to 645 is DHHA1; the sequence is VITLRPDKLIGISARSLGQINVQVIMEKLGGGGHLSNAATQLKDVTIAEAEKQL.

The protein belongs to the GdpP/PdeA phosphodiesterase family. It depends on heme b as a cofactor. Requires Mn(2+) as cofactor.

The protein localises to the cell membrane. It catalyses the reaction 3',3'-c-di-AMP + H2O = 5'-O-phosphonoadenylyl-(3'-&gt;5')-adenosine + H(+). Has phosphodiesterase (PDE) activity against cyclic-di-AMP (c-di-AMP). Overexpression decreases export of c-di-AMP, leads to slightly increased susceptibility to the antibiotic cefuroxime and somewhat slower growth in macrophages. There are at least 2 PDEs for c-di-AMP in this bacteria (this one and pgpH); this may be the major PDE for intracellular growth in host macrophages. During host infection c-di-AMP is secreted into the host cytoplasm which leads to interferon-beta production and secretion by the host. c-di-AMP is a second messenger that mediates growth, cell wall stability and virulence. May monitor cellular heme or NO levels. This chain is Cyclic-di-AMP phosphodiesterase PdeA, found in Listeria monocytogenes serotype 1/2a (strain 10403S).